A 146-amino-acid chain; its full sequence is MADPARAARLAQRIKVIVAEALRKQVKQPGVENITITETRVTNDLQHATIYYTIFGGTEARQEAEDSLAKSKGILRREVGKNLTIRLTPTLEFISDEVPETASHVEELIRLAKERDAELAARAARAEFAGEADPYKKPEDDEAAES.

Positions glutamate 127 to serine 146 are disordered.

Belongs to the RbfA family. As to quaternary structure, monomer. Binds 30S ribosomal subunits, but not 50S ribosomal subunits or 70S ribosomes.

The protein resides in the cytoplasm. Its function is as follows. One of several proteins that assist in the late maturation steps of the functional core of the 30S ribosomal subunit. Associates with free 30S ribosomal subunits (but not with 30S subunits that are part of 70S ribosomes or polysomes). Required for efficient processing of 16S rRNA. May interact with the 5'-terminal helix region of 16S rRNA. This chain is Ribosome-binding factor A, found in Renibacterium salmoninarum (strain ATCC 33209 / DSM 20767 / JCM 11484 / NBRC 15589 / NCIMB 2235).